Here is a 354-residue protein sequence, read N- to C-terminus: CREB/ATF bZIP transcription factor (354 aa).

Disordered regions lie at residues 1–95 (MRHS…PGEE), 113–156 (PRQP…AAEM), and 171–214 (GGCS…RKAA). Residue S50 is modified to Phosphoserine. Low complexity predominate over residues 121–132 (DPGLSSPGPLSS). 2 stretches are compositionally biased toward gly residues: residues 133–143 (SGGGSDSGGLW) and 190–199 (PGGGGGGGSG). The 64-residue stretch at 204–267 (QAATKSPRKA…QALQEESRYL (64 aa)) folds into the bZIP domain. The segment covering 205-214 (AATKSPRKAA) has biased composition (low complexity). The interval 219–226 (RLNRLKKK) is basic motif. The interval 232–267 (LESRVRGLAAENQELRAENRELGKRVQALQEESRYL) is leucine-zipper. The short motif at 303–306 (DHDY) is the HCFC1-binding motif (HBM) element.

It belongs to the bZIP family. ATF subfamily. As to quaternary structure, interacts with HCFC1; the interaction inhibits CREB3 transcriptional activity. Interacts with CREB3; the interaction occurs only in combination with HCFC1. As to expression, in adults, expressed most abundantly in heart, liver and skeletal muscle, moderately abundant in kidney and pancreas, and barely detectable in lung. In fetal tissues, expressed most abundantly in kidney and very low amounts in heart, lung and liver.

The protein resides in the nucleus. Functionally, strongly activates transcription when bound to HCFC1. Suppresses the expression of HSV proteins in cells infected with the virus in a HCFC1-dependent manner. Also suppresses the HCFC1-dependent transcriptional activation by CREB3 and reduces the amount of CREB3 in the cell. Able to down-regulate expression of some cellular genes in CREBZF-expressing cells. The sequence is that of CREB/ATF bZIP transcription factor (CREBZF) from Homo sapiens (Human).